The primary structure comprises 132 residues: Small ribosomal subunit protein uS8 (132 aa).

Belongs to the universal ribosomal protein uS8 family. As to quaternary structure, part of the 30S ribosomal subunit. Contacts proteins S5 and S12.

One of the primary rRNA binding proteins, it binds directly to 16S rRNA central domain where it helps coordinate assembly of the platform of the 30S subunit. In Clostridium beijerinckii (strain ATCC 51743 / NCIMB 8052) (Clostridium acetobutylicum), this protein is Small ribosomal subunit protein uS8.